Reading from the N-terminus, the 380-residue chain is Erythronate-4-phosphate dehydrogenase (380 aa).

Substrate is bound by residues serine 45 and threonine 66. NAD(+) is bound by residues 126–127 (QV), aspartate 146, threonine 175, 206–208 (ASR), and aspartate 232. The active site involves arginine 208. Glutamate 237 is an active-site residue. The active-site Proton donor is the histidine 254. Glycine 257 lines the NAD(+) pocket. Tyrosine 258 is a binding site for substrate.

This sequence belongs to the D-isomer specific 2-hydroxyacid dehydrogenase family. PdxB subfamily. In terms of assembly, homodimer.

The protein resides in the cytoplasm. It carries out the reaction 4-phospho-D-erythronate + NAD(+) = (R)-3-hydroxy-2-oxo-4-phosphooxybutanoate + NADH + H(+). Its pathway is cofactor biosynthesis; pyridoxine 5'-phosphate biosynthesis; pyridoxine 5'-phosphate from D-erythrose 4-phosphate: step 2/5. Functionally, catalyzes the oxidation of erythronate-4-phosphate to 3-hydroxy-2-oxo-4-phosphonooxybutanoate. The sequence is that of Erythronate-4-phosphate dehydrogenase from Pseudomonas paraeruginosa (strain DSM 24068 / PA7) (Pseudomonas aeruginosa (strain PA7)).